Here is a 181-residue protein sequence, read N- to C-terminus: Large ribosomal subunit protein uL5 (181 aa).

It belongs to the universal ribosomal protein uL5 family. As to quaternary structure, part of the 50S ribosomal subunit; contacts the 5S rRNA and probably tRNA. Forms a bridge to the 30S subunit in the 70S ribosome.

Its function is as follows. This is one of the proteins that bind and probably mediate the attachment of the 5S RNA into the large ribosomal subunit, where it forms part of the central protuberance. In the 70S ribosome it contacts protein S13 of the 30S subunit (bridge B1b), connecting the 2 subunits; this bridge is implicated in subunit movement. May contact the P site tRNA; the 5S rRNA and some of its associated proteins might help stabilize positioning of ribosome-bound tRNAs. The polypeptide is Large ribosomal subunit protein uL5 (Methanococcus vannielii).